The following is a 244-amino-acid chain: RAD51-like protein 1 (244 aa).

In terms of assembly, interacts with brc-2 and rad-51.

It is found in the nucleus. Has a role in the homologous recombination repair (HRR) of genomic DNA during meiosis. Required for rad-51 recruitment onto ssDNA gaps generated at stalled replication fork barriers. This chain is RAD51-like protein 1, found in Caenorhabditis briggsae.